The following is a 522-amino-acid chain: BTB/POZ domain-containing protein 16 (522 aa).

The BTB domain maps to 166 to 222 (INDPAVTRVAFALALKNLYMKEVEMTVDNVLGVLASAHILQFNRLFQKCVNMMMNRL).

The chain is BTB/POZ domain-containing protein 16 (Btbd16) from Mus musculus (Mouse).